Here is a 793-residue protein sequence, read N- to C-terminus: Endonuclease MutS2 (793 aa).

ATP is bound at residue 329-336 (GPNTGGKT). Residues 611 to 639 (LARARQAVEPTEEEQRARRRGEVPRGLKP) form a disordered region. The span at 623-639 (EEQRARRRGEVPRGLKP) shows a compositional bias: basic and acidic residues. The Smr domain occupies 717–792 (VDLRGLMVEE…GDGVTVAKLR (76 aa)).

Belongs to the DNA mismatch repair MutS family. MutS2 subfamily. In terms of assembly, homodimer. Binds to stalled ribosomes, contacting rRNA.

Endonuclease that is involved in the suppression of homologous recombination and thus may have a key role in the control of bacterial genetic diversity. Functionally, acts as a ribosome collision sensor, splitting the ribosome into its 2 subunits. Detects stalled/collided 70S ribosomes which it binds and splits by an ATP-hydrolysis driven conformational change. Acts upstream of the ribosome quality control system (RQC), a ribosome-associated complex that mediates the extraction of incompletely synthesized nascent chains from stalled ribosomes and their subsequent degradation. Probably generates substrates for RQC. The sequence is that of Endonuclease MutS2 from Symbiobacterium thermophilum (strain DSM 24528 / JCM 14929 / IAM 14863 / T).